The sequence spans 210 residues: Primase-associated factor LEF-2 (210 aa).

The protein belongs to the baculoviridae LEF-2 family. Interacts with the DNA primase.

The protein resides in the virion. The protein localises to the host nucleus. It is found in the host cytoplasm. Its function is as follows. Plays an essential role in viral DNA replication. Does not seem to participate in the initiation step but is rather important for the amplification of DNA. Also required for expression from the vp39 and polh promoters. The sequence is that of Primase-associated factor LEF-2 (LEF-2) from Autographa californica nuclear polyhedrosis virus (AcMNPV).